Consider the following 137-residue polypeptide: Large ribosomal subunit protein uL16 (137 aa).

This sequence belongs to the universal ribosomal protein uL16 family. Part of the 50S ribosomal subunit.

Its function is as follows. Binds 23S rRNA and is also seen to make contacts with the A and possibly P site tRNAs. The sequence is that of Large ribosomal subunit protein uL16 from Pseudomonas syringae pv. tomato (strain ATCC BAA-871 / DC3000).